Here is a 218-residue protein sequence, read N- to C-terminus: Pyridoxine/pyridoxamine 5'-phosphate oxidase (218 aa).

Substrate is bound by residues 14–17 and lysine 72; that span reads RREY. Residues 67–72, 82–83, arginine 88, lysine 89, and glutamine 111 contribute to the FMN site; these read RIVLLK and YT. Positions 129, 133, and 137 each coordinate substrate. FMN contacts are provided by residues 146–147 and tryptophan 191; that span reads QS. 197 to 199 contacts substrate; it reads RLH. Residue arginine 201 participates in FMN binding.

This sequence belongs to the pyridoxamine 5'-phosphate oxidase family. In terms of assembly, homodimer. Requires FMN as cofactor.

It carries out the reaction pyridoxamine 5'-phosphate + O2 + H2O = pyridoxal 5'-phosphate + H2O2 + NH4(+). The catalysed reaction is pyridoxine 5'-phosphate + O2 = pyridoxal 5'-phosphate + H2O2. It participates in cofactor metabolism; pyridoxal 5'-phosphate salvage; pyridoxal 5'-phosphate from pyridoxamine 5'-phosphate: step 1/1. It functions in the pathway cofactor metabolism; pyridoxal 5'-phosphate salvage; pyridoxal 5'-phosphate from pyridoxine 5'-phosphate: step 1/1. Functionally, catalyzes the oxidation of either pyridoxine 5'-phosphate (PNP) or pyridoxamine 5'-phosphate (PMP) into pyridoxal 5'-phosphate (PLP). The chain is Pyridoxine/pyridoxamine 5'-phosphate oxidase from Escherichia coli O7:K1 (strain IAI39 / ExPEC).